The following is a 376-amino-acid chain: Erythronate-4-phosphate dehydrogenase (376 aa).

Residues S45 and T67 each coordinate substrate. Residue D147 coordinates NAD(+). The active site involves R209. D233 contributes to the NAD(+) binding site. E238 is an active-site residue. Catalysis depends on H255, which acts as the Proton donor. An NAD(+)-binding site is contributed by G258. Y259 serves as a coordination point for substrate.

The protein belongs to the D-isomer specific 2-hydroxyacid dehydrogenase family. PdxB subfamily. Homodimer.

The protein localises to the cytoplasm. It catalyses the reaction 4-phospho-D-erythronate + NAD(+) = (R)-3-hydroxy-2-oxo-4-phosphooxybutanoate + NADH + H(+). The protein operates within cofactor biosynthesis; pyridoxine 5'-phosphate biosynthesis; pyridoxine 5'-phosphate from D-erythrose 4-phosphate: step 2/5. Functionally, catalyzes the oxidation of erythronate-4-phosphate to 3-hydroxy-2-oxo-4-phosphonooxybutanoate. The sequence is that of Erythronate-4-phosphate dehydrogenase from Shewanella oneidensis (strain ATCC 700550 / JCM 31522 / CIP 106686 / LMG 19005 / NCIMB 14063 / MR-1).